A 466-amino-acid chain; its full sequence is Histidine--tRNA ligase (466 aa).

The protein belongs to the class-II aminoacyl-tRNA synthetase family. Homodimer.

It is found in the cytoplasm. It catalyses the reaction tRNA(His) + L-histidine + ATP = L-histidyl-tRNA(His) + AMP + diphosphate + H(+). This Bifidobacterium animalis subsp. lactis (strain AD011) protein is Histidine--tRNA ligase.